We begin with the raw amino-acid sequence, 85 residues long: Neurotoxin beta-KTx 17 (85 aa).

Positions 1-20 (MKQYIFFLALIVLVSTFAEA) are cleaved as a signal peptide. Positions 21–37 (GKKTEILDKVKKVFSKG) are excised as a propeptide. The 37-residue stretch at 49-85 (ELGCPFIEKWCEDHCESKKQVGKCENFDCSCVKLGGK) folds into the BetaSPN-type CS-alpha/beta domain. Cystine bridges form between C52-C72, C59-C77, and C63-C79.

Belongs to the long chain scorpion toxin family. Class 2 subfamily. In terms of tissue distribution, expressed by the venom gland.

It is found in the secreted. In terms of biological role, has a very weak effect to block voltage-gated potassium channel Kv1.1/KCNA1. The chain is Neurotoxin beta-KTx 17 from Lychas mucronatus (Chinese swimming scorpion).